The sequence spans 400 residues: Nicotinate phosphoribosyltransferase (400 aa).

His220 carries the phosphohistidine; by autocatalysis modification.

It belongs to the NAPRTase family. Transiently phosphorylated on a His residue during the reaction cycle. Phosphorylation strongly increases the affinity for substrates and increases the rate of nicotinate D-ribonucleotide production. Dephosphorylation regenerates the low-affinity form of the enzyme, leading to product release.

The enzyme catalyses nicotinate + 5-phospho-alpha-D-ribose 1-diphosphate + ATP + H2O = nicotinate beta-D-ribonucleotide + ADP + phosphate + diphosphate. The protein operates within cofactor biosynthesis; NAD(+) biosynthesis; nicotinate D-ribonucleotide from nicotinate: step 1/1. Functionally, catalyzes the synthesis of beta-nicotinate D-ribonucleotide from nicotinate and 5-phospho-D-ribose 1-phosphate at the expense of ATP. This is Nicotinate phosphoribosyltransferase from Salmonella heidelberg (strain SL476).